A 593-amino-acid chain; its full sequence is UvrABC system protein C (593 aa).

Residues 17-94 (MEPGCYLMKD…IKQYQPRYNI (78 aa)) enclose the GIY-YIG domain. A UVR domain is found at 199-234 (KTILKSLEERMLTASESLDFERAKEYRDLIQHIQNL).

This sequence belongs to the UvrC family. As to quaternary structure, interacts with UvrB in an incision complex.

It localises to the cytoplasm. Functionally, the UvrABC repair system catalyzes the recognition and processing of DNA lesions. UvrC both incises the 5' and 3' sides of the lesion. The N-terminal half is responsible for the 3' incision and the C-terminal half is responsible for the 5' incision. In Staphylococcus aureus (strain MRSA252), this protein is UvrABC system protein C.